Reading from the N-terminus, the 249-residue chain is Small ribosomal subunit protein uS3 (249 aa).

Residues 39–108 (IRQLINKKLA…TVAVNVAEIP (70 aa)) enclose the KH type-2 domain. The tract at residues 214–249 (ETFARPQRRDRDERRPEGGDRPARRRPTARRRTGGE) is disordered. Over residues 220-235 (QRRDRDERRPEGGDRP) the composition is skewed to basic and acidic residues. A compositionally biased stretch (basic residues) spans 236 to 249 (ARRRPTARRRTGGE).

Belongs to the universal ribosomal protein uS3 family. Part of the 30S ribosomal subunit. Forms a tight complex with proteins S10 and S14.

Functionally, binds the lower part of the 30S subunit head. Binds mRNA in the 70S ribosome, positioning it for translation. This Deinococcus radiodurans (strain ATCC 13939 / DSM 20539 / JCM 16871 / CCUG 27074 / LMG 4051 / NBRC 15346 / NCIMB 9279 / VKM B-1422 / R1) protein is Small ribosomal subunit protein uS3.